Consider the following 480-residue polypeptide: Chromosomal replication initiator protein DnaA (480 aa).

A domain I, interacts with DnaA modulators region spans residues 1-71; it reads MKEFWQTCVS…EALAAEWYQR (71 aa). Residues 71-142 form a domain II region; it reads RPVQVTFELP…DAANIVYERS (72 aa). Positions 143 to 359 are domain III, AAA+ region; that stretch reads RLNTDLTFEN…GALRKVLAYA (217 aa). Positions 187, 189, 190, and 191 each coordinate ATP. The interval 360–480 is domain IV, binds dsDNA; the sequence is RFHGRDVLTV…LHVLEQTLKG (121 aa).

The protein belongs to the DnaA family. Oligomerizes as a right-handed, spiral filament on DNA at oriC.

The protein resides in the cytoplasm. Functionally, plays an essential role in the initiation and regulation of chromosomal replication. ATP-DnaA binds to the origin of replication (oriC) to initiate formation of the DNA replication initiation complex once per cell cycle. Binds the DnaA box (a 9 base pair repeat at the origin) and separates the double-stranded (ds)DNA. Forms a right-handed helical filament on oriC DNA; dsDNA binds to the exterior of the filament while single-stranded (ss)DNA is stabiized in the filament's interior. The ATP-DnaA-oriC complex binds and stabilizes one strand of the AT-rich DNA unwinding element (DUE), permitting loading of DNA polymerase. After initiation quickly degrades to an ADP-DnaA complex that is not apt for DNA replication. Binds acidic phospholipids. The sequence is that of Chromosomal replication initiator protein DnaA from Bordetella bronchiseptica (strain ATCC BAA-588 / NCTC 13252 / RB50) (Alcaligenes bronchisepticus).